Reading from the N-terminus, the 440-residue chain is Tetratricopeptide repeat protein 5 (440 aa).

TPR repeat units follow at residues 7–61 (EEAK…EEVL), 68–98 (AQAL…AVKL), 103–130 (VEAW…SGAL), 136–174 (KVSL…AVQM), and 179–216 (GRSW…AEKV). Positions 13–24 (LQKLQGLVDRLY) match the Nuclear export signal motif. At Ser203 the chain carries Phosphoserine; by ATM. Ser221 is modified (phosphoserine; by CHEK2). The stretch at 224–253 (PDLHLNRATLHKYEESYGEALEGFSQAAAL) is one TPR 6 repeat. The tract at residues 285 to 287 (KPK) is mediates interaction with 28S rRNA of ribosome-coding tubulin.

Interacts with JMY and p300/EP300; the interaction occurs in the nucleus and augments the association between JMY and p300/EP300 in response to DNA damage. Interacts with PRMT5; the interaction is DNA damage-dependent and promotes PRMT5 interaction with p53/TP53 and subsequent methylation. Forms a complex with HSF1 and p300/EP300; these interactions augment chromatin-bound HSF1 and p300/EP300 histone acetyltransferase activity, resulting in enhanced heat-shock-responsive transcription. Interacts with JMY; the interaction occurs in the cytoplasm and results in the inhibition of JYM's nucleation activity. Interacts with ribosome-coding tubulin (via 60S subunit 28S rRNA and protein uL24/RPL26) and the N-terminal of nascent tubulin polypeptide (via alpha-tubulin MREC motif and beta-tubulin MREI motif); these interactions result in tubulin mRNA-targeted degradation. Interacts with ATP5F1B; the interaction occurs in the mitochondria and results in ATP production decrease. Interacts with p53/TP53; the interaction occurs in the mitochondria and results in increased apoptosis. Phosphorylation by ATM kinase induces nuclear accumulation while interfering with nuclear export, and phosphorylation by CHEK2 kinase enhances nuclear stability. As to expression, expressed in heart, brain, spleen, lung, liver, skeletal muscle, kidney and testis.

The protein localises to the nucleus. Its subcellular location is the cytoplasm. It is found in the cytoplasmic vesicle. It localises to the mitochondrion matrix. In terms of biological role, cofactor involved in the regulation of various cellular mechanisms such as actin regulation, autophagy, chromatin regulation and DNA repair. In physiological conditions, interacts with cofactor JMY in the cytoplasm which prevents JMY's actin nucleation activity and ability to activate the Arp2/3 complex. Acts as a negative regulator of nutrient stress-induced autophagy by inhibiting JMY's interaction with MAP1LC3B, thereby preventing autophagosome formation. Involves in tubulin autoregulation by promoting its degradation in response to excess soluble tubulin. To do so, associates with the active ribosome near the ribosome exit tunnel and with nascent tubulin polypeptides early during their translation, triggering tubulin mRNA-targeted degradation. Following DNA damage, phosphorylated by DNA damage responsive protein kinases ATM and CHEK2, leading to its nuclear accumulation and stability. Nuclear TTC5/STRAP promotes the assembly of a stress-responsive p53/TP53 coactivator complex, which includes the coactivators JMY and p300, thereby increasing p53/TP53-dependent transcription and apoptosis. Also recruits arginine methyltransferase PRMT5 to p53/TP53 when DNA is damaged, allowing PRMT5 to methylate p53/TP53. In DNA stress conditions, also prevents p53/TP53 degradation by E3 ubiquitin ligase MDM2. Upon heat-shock stress, forms a chromatin-associated complex with heat-shock factor 1 HSF1 and p300/EP300 to stimulate heat-shock-responsive transcription, thereby increasing cell survival. Mitochondrial TTC5/STRAP interacts with ATP synthase subunit beta ATP5F1B which decreased ATP synthase activity and lowers mitochondrial ATP production, thereby regulating cellular respiration and mitochondrial-dependent apoptosis. Mitochondrial TTC5/STRAP also regulates p53/TP53-mediated apoptosis. This chain is Tetratricopeptide repeat protein 5, found in Mus musculus (Mouse).